The sequence spans 131 residues: Hyastatin (131 aa).

A signal peptide spans 1–16 (MRVLLILVSLAALAHA). Cystine bridges form between C103–C117, C107–C124, and C118–C125. Position 130 is a lysine amide (K130).

In terms of tissue distribution, strongly expressed in hemocytes, with weaker expression in gills and epidermis. Expressed at low levels in hepatopancreas.

It localises to the cytoplasmic granule. Antimicrobial peptide. Has strong antibacterial activity against the Gram-positive bacterium C.glutamicum (MIC=0.4 uM) and the Gram-negative bacterium E.coli (MIC=12.5 uM). Has weak antibacterial activity against the Gram-positive bacterium S.aureus (MIC&gt;50 uM) and the Gram-negative bacterium P.aeruginosa (MIC&gt;50 uM). Has antifungal activity against S.cerevisiae (MIC=12.5) and C.albicans (MIC=6.3 uM). Has weak antifungal activity against the mold B.cinerea. Presents chitin-binding activity. The polypeptide is Hyastatin (Hyas araneus (Atlantic lyre crab)).